We begin with the raw amino-acid sequence, 513 residues long: GMP synthase [glutamine-hydrolyzing] (513 aa).

The region spanning 8-198 (KIIVLDYGSQ…ALNICGAKGN (191 aa)) is the Glutamine amidotransferase type-1 domain. The active-site Nucleophile is the Cys85. Active-site residues include His172 and Glu174. The GMPS ATP-PPase domain maps to 199–388 (WSMENFIDMQ…LGMPDEIVWR (190 aa)). An ATP-binding site is contributed by 226-232 (SGGVDSS).

As to quaternary structure, homodimer.

It carries out the reaction XMP + L-glutamine + ATP + H2O = GMP + L-glutamate + AMP + diphosphate + 2 H(+). The protein operates within purine metabolism; GMP biosynthesis; GMP from XMP (L-Gln route): step 1/1. Its function is as follows. Catalyzes the synthesis of GMP from XMP. This chain is GMP synthase [glutamine-hydrolyzing] (guaA), found in Lactococcus lactis subsp. cremoris (strain MG1363).